The sequence spans 557 residues: MTMLKDPSKKYRAFPTIDLPDRTWPSKTITQAPIWCSSDLRDGNQSLIEPMDSEKKLRFWKTLVQVGVKEIEASFPSASQTDFDFVRTLIEDGHIPDDTTIQVLTQAREDLIARTFESLRGAKKAIVHLYNATCPSFRRIVFNQDKQGVKDIAVNAAKLFVKYAAQQPDTHWTFQYSPETFSATELEFAKEVCDAVIEVWNPTPEHKIILNLPATVEVATPNVYADQIEWFCRNINRRDSVIISLHTHNDRGTGIAATELGLMAGADRAEGCLFGNGERTGNVDLVTLALNLYTQGIDPQLDFSDIDGVRKVVEECNQLPVHPRHPYVGDLVHTAFSGSHQDAIRKGFAKQQEGELWEVPYLPIDPADIGRSYEAVIRVNSQSGKGGITYLLEQEYGISLPRRMQIEFSQVVQGETDRLGLEMTAEQIYKLLQKEYLQANAPYALVSHRLQEENGSSHVQVEVSGEGETTLHWHGKGNGALEALVAGLPVNVEIMDYNEHAIGAGTNAKAAAYIELRVAGGRPVHGVGIDENITTASFKALFSALNRSLSQQQAKAA.

Residues 33–307 (PIWCSSDLRD…DPQLDFSDID (275 aa)) form the Pyruvate carboxyltransferase domain. Mg(2+) contacts are provided by D42, H246, H248, and N282. A regulatory domain region spans residues 439 to 557 (ANAPYALVSH…SLSQQQAKAA (119 aa)).

The protein belongs to the alpha-IPM synthase/homocitrate synthase family. LeuA type 2 subfamily. As to quaternary structure, homodimer. Mg(2+) serves as cofactor.

The protein localises to the cytoplasm. The enzyme catalyses 3-methyl-2-oxobutanoate + acetyl-CoA + H2O = (2S)-2-isopropylmalate + CoA + H(+). Its pathway is amino-acid biosynthesis; L-leucine biosynthesis; L-leucine from 3-methyl-2-oxobutanoate: step 1/4. Catalyzes the condensation of the acetyl group of acetyl-CoA with 3-methyl-2-oxobutanoate (2-ketoisovalerate) to form 3-carboxy-3-hydroxy-4-methylpentanoate (2-isopropylmalate). This Pseudomonas entomophila (strain L48) protein is 2-isopropylmalate synthase.